The following is a 319-amino-acid chain: 4-diphosphocytidyl-2-C-methyl-D-erythritol kinase (319 aa).

The active site involves Lys18. 103–113 provides a ligand contact to ATP; sequence PIGAGLAGGST. The active site involves Asp145.

The protein belongs to the GHMP kinase family. IspE subfamily.

It carries out the reaction 4-CDP-2-C-methyl-D-erythritol + ATP = 4-CDP-2-C-methyl-D-erythritol 2-phosphate + ADP + H(+). Its pathway is isoprenoid biosynthesis; isopentenyl diphosphate biosynthesis via DXP pathway; isopentenyl diphosphate from 1-deoxy-D-xylulose 5-phosphate: step 3/6. Its function is as follows. Catalyzes the phosphorylation of the position 2 hydroxy group of 4-diphosphocytidyl-2C-methyl-D-erythritol. This chain is 4-diphosphocytidyl-2-C-methyl-D-erythritol kinase, found in Prochlorococcus marinus (strain NATL1A).